The following is a 400-amino-acid chain: Ornithine aminotransferase (400 aa).

Lys254 bears the N6-(pyridoxal phosphate)lysine mark.

It belongs to the class-III pyridoxal-phosphate-dependent aminotransferase family. OAT subfamily. Requires pyridoxal 5'-phosphate as cofactor.

The protein resides in the cytoplasm. The catalysed reaction is a 2-oxocarboxylate + L-ornithine = L-glutamate 5-semialdehyde + an L-alpha-amino acid. It functions in the pathway amino-acid biosynthesis; L-proline biosynthesis; L-glutamate 5-semialdehyde from L-ornithine: step 1/1. Functionally, catalyzes the interconversion of ornithine to glutamate semialdehyde. This chain is Ornithine aminotransferase, found in Exiguobacterium sp. (strain ATCC BAA-1283 / AT1b).